Reading from the N-terminus, the 364-residue chain is E3 ubiquitin-protein ligase rnf146 (364 aa).

The tract at residues 18-37 (KKVSGEAVPEGSGSPSSPSL) is disordered. Residues 22-34 (GEAVPEGSGSPSS) are compositionally biased toward low complexity. Residues 42–80 (CPICLQSCVHPVRLPCRHIFCFLCVKGASWHSKRCALCR) form an RING-type zinc finger. One can recognise a WWE domain in the interval 102–178 (SATGGCGTGS…EHGRRRRMKR (77 aa)). Residues tyrosine 118, arginine 121, tryptophan 125, tyrosine 155, glutamine 164, arginine 174, and lysine 186 each contribute to the a glycoprotein site. Disordered stretches follow at residues 217 to 262 (AAAE…PASS) and 279 to 364 (NEQE…VTKV). 2 stretches are compositionally biased toward acidic residues: residues 281–295 (QEPE…DDSA) and 308–322 (TSDD…DENE).

The protein resides in the cytoplasm. It localises to the cytosol. Its subcellular location is the nucleus. It carries out the reaction S-ubiquitinyl-[E2 ubiquitin-conjugating enzyme]-L-cysteine + [acceptor protein]-L-lysine = [E2 ubiquitin-conjugating enzyme]-L-cysteine + N(6)-ubiquitinyl-[acceptor protein]-L-lysine.. It functions in the pathway protein modification; protein ubiquitination. Functionally, E3 ubiquitin-protein ligase that specifically binds poly-ADP-ribosylated proteins and mediates their ubiquitination and subsequent degradation. May regulate many important biological processes, such as cell survival and DNA damage response. Acts as an activator of the Wnt signaling pathway by mediating the ubiquitination of poly-ADP-ribosylated proteins. Neuroprotective protein. Protects against cell death induced by DNA damaging agents and rescues cells from G1 arrest. Promotes cell survival after gamma-irradiation. Facilitates DNA repair. The chain is E3 ubiquitin-protein ligase rnf146 (rnf146) from Danio rerio (Zebrafish).